Here is a 347-residue protein sequence, read N- to C-terminus: UDP-N-acetylglucosamine--N-acetylmuramyl-(pentapeptide) pyrophosphoryl-undecaprenol N-acetylglucosamine transferase (347 aa).

Residues 11 to 13, Asn-122, Arg-163, Ser-189, and Gln-279 contribute to the UDP-N-acetyl-alpha-D-glucosamine site; that span reads TGG.

Belongs to the glycosyltransferase 28 family. MurG subfamily.

It localises to the cell inner membrane. It catalyses the reaction di-trans,octa-cis-undecaprenyl diphospho-N-acetyl-alpha-D-muramoyl-L-alanyl-D-glutamyl-meso-2,6-diaminopimeloyl-D-alanyl-D-alanine + UDP-N-acetyl-alpha-D-glucosamine = di-trans,octa-cis-undecaprenyl diphospho-[N-acetyl-alpha-D-glucosaminyl-(1-&gt;4)]-N-acetyl-alpha-D-muramoyl-L-alanyl-D-glutamyl-meso-2,6-diaminopimeloyl-D-alanyl-D-alanine + UDP + H(+). The protein operates within cell wall biogenesis; peptidoglycan biosynthesis. Its function is as follows. Cell wall formation. Catalyzes the transfer of a GlcNAc subunit on undecaprenyl-pyrophosphoryl-MurNAc-pentapeptide (lipid intermediate I) to form undecaprenyl-pyrophosphoryl-MurNAc-(pentapeptide)GlcNAc (lipid intermediate II). The polypeptide is UDP-N-acetylglucosamine--N-acetylmuramyl-(pentapeptide) pyrophosphoryl-undecaprenol N-acetylglucosamine transferase (Sulfurihydrogenibium sp. (strain YO3AOP1)).